Here is a 418-residue protein sequence, read N- to C-terminus: AP-3 complex subunit mu-1 (418 aa).

In terms of domain architecture, MHD spans 176 to 417; that stretch reads NNEAYFDVVE…ITKAGKFQVR (242 aa).

This sequence belongs to the adaptor complexes medium subunit family. Adaptor protein complex 3 (AP-3) is a heterotetramer composed of two large adaptins (delta-type subunit AP3D1 and beta-type subunit AP3B1 or AP3B2), a medium adaptin (mu-type subunit AP3M1 or AP3M2) and a small adaptin (sigma-type subunit APS1 or AP3S2). Interacts with AGAP1. AP-3 associates with the BLOC-1 complex.

Its subcellular location is the golgi apparatus. It is found in the cytoplasmic vesicle membrane. Its function is as follows. Part of the AP-3 complex, an adaptor-related complex which is not clathrin-associated. The complex is associated with the Golgi region as well as more peripheral structures. It facilitates the budding of vesicles from the Golgi membrane and may be directly involved in trafficking to lysosomes. In concert with the BLOC-1 complex, AP-3 is required to target cargos into vesicles assembled at cell bodies for delivery into neurites and nerve terminals. The polypeptide is AP-3 complex subunit mu-1 (Ap3m1) (Rattus norvegicus (Rat)).